A 156-amino-acid chain; its full sequence is PopC secretion inhibitor (156 aa).

Residues 1–89 are disordered; sequence MNPGSAPWER…PVRSRAEVHQ (89 aa). Residues 8 to 28 show a composition bias toward basic and acidic residues; that stretch reads WERRTRERMRAMSRKNGEWGD.

In terms of assembly, interacts with PopC in non-starving cells.

It localises to the cytoplasm. With respect to regulation, in response to starvation, RelA is activated resulting in the accumulation of (p)ppGpp, which causes the degradation of PopD in an FtsH(D)-dependent manner, thereby releasing pre-formed PopC for secretion. Functionally, inhibitor of protease PopC. In non-starving cells, forms a cytoplasmic complex with PopC and inhibits PopC secretion and activity. The sequence is that of PopC secretion inhibitor from Myxococcus xanthus (strain DK1622).